A 471-amino-acid chain; its full sequence is Major facilitator-type transporter psiT1 (471 aa).

A disordered region spans residues 1–36 (MNPTTATDAHERTSLLSGRPQSAANSTAPYERQVQP). Residues 14 to 36 (SLLSGRPQSAANSTAPYERQVQP) show a composition bias toward polar residues. Residue asparagine 25 is glycosylated (N-linked (GlcNAc...) asparagine). 8 helical membrane passes run 44–64 (TPVTVITIITLIYRLATTMVI), 108–128 (AIMVSMTTVIDGLGGILGTGI), 140–160 (PVLMFLLSCTMIDHLAILTVQ), 168–188 (LVTFGLIMIVETIGNENTTVF), 212–232 (GWLVLGGALAYSIGGSITTFL), 237–257 (AVYIVSFSVTGIVLTFTAFVL), 322–342 (LHSFIVTLADAYALPAMLIFF), and 356–376 (VMTTYSVSSVFVLAIALPLFI). N-linked (GlcNAc...) asparagine glycosylation is present at asparagine 384. Residues 424 to 444 (VHITVISWTIESLAYIVLGTV) traverse the membrane as a helical segment.

This sequence belongs to the major facilitator superfamily. TCR/Tet family.

It is found in the membrane. Functionally, major facilitator-type transporter; part of the gene cluster that mediates the biosynthesis of psilocybin, a psychotropic tryptamine-derived natural product. This chain is Major facilitator-type transporter psiT1, found in Psilocybe cyanescens.